The chain runs to 263 residues: Zinc import ATP-binding protein ZnuC (263 aa).

The 216-residue stretch at 11–226 folds into the ABC transporter domain; sequence VELKNINVVF…PTFIHFFGDQ (216 aa). 43–50 lines the ATP pocket; it reads GPNGGGKS.

Belongs to the ABC transporter superfamily. Zinc importer (TC 3.A.1.15.5) family. The complex is composed of two ATP-binding proteins (ZnuC), two transmembrane proteins (ZnuB) and a solute-binding protein (ZnuA).

Its subcellular location is the cell inner membrane. The catalysed reaction is Zn(2+)(out) + ATP(in) + H2O(in) = Zn(2+)(in) + ADP(in) + phosphate(in) + H(+)(in). Part of the ABC transporter complex ZnuABC involved in zinc import. Responsible for energy coupling to the transport system. The protein is Zinc import ATP-binding protein ZnuC of Pasteurella multocida (strain Pm70).